Consider the following 373-residue polypeptide: mRNA-decapping enzyme subunit 2 (373 aa).

The Nudix hydrolase domain maps to 106–234 (CRVPVTGAII…HGVSGLKLYM (129 aa)). The Nudix box motif lies at 139–160 (GKKSKDEEDHACAIREVLEETG). Mg(2+)-binding residues include E154 and E158. Positions 178 and 233 each coordinate ATP. Residues 233 to 250 (YMVAPFLSSLKSWILKHP) form an RNA binding region. The interval 275–342 (GNGTATVESQ…ESHNTKPVVD (68 aa)) is disordered. Positions 298 to 323 (NSRKPELKRTTMESHSTKPELRKGTM) are enriched in basic and acidic residues. The segment covering 324 to 334 (ESHNTTATVES) has biased composition (polar residues). Residues 370–373 (GNSA) carry the PDZ-binding motif.

It belongs to the Nudix hydrolase family. DCP2 subfamily. As to quaternary structure, homodimer. Catalytic component of the decapping complex. Interacts with DCP1, DCP5 and VCS. Mn(2+) is required as a cofactor. The cofactor is Mg(2+). In terms of tissue distribution, expressed in seedlings, mostly in root tips, root hairs, and the vascular system. Also present in roots, leaves, stems, and flowers.

The protein localises to the cytoplasm. It localises to the P-body. The enzyme catalyses a 5'-end (N(7)-methyl 5'-triphosphoguanosine)-ribonucleoside in mRNA + H2O = N(7)-methyl-GDP + a 5'-end phospho-ribonucleoside in mRNA + 2 H(+). With respect to regulation, inhibited by the product 7-methyl GDP. Its function is as follows. Catalytic component of the decapping complex necessary for the degradation of mRNAs, both in normal mRNA turnover and in nonsense-mediated mRNA decay. Removes the 7-methyl guanine cap structure from mRNA molecules, yielding a 5'-phosphorylated mRNA fragment and 7m-GDP. Essential for postembryonic development, especially during the formation of the shoot apical meristem (SAM). The polypeptide is mRNA-decapping enzyme subunit 2 (DCP2) (Arabidopsis thaliana (Mouse-ear cress)).